A 77-amino-acid chain; its full sequence is Acyl carrier protein (77 aa).

The Carrier domain maps to 2 to 77 (SDVAERVKKI…DAIDFITANS (76 aa)). Ser-37 is modified (O-(pantetheine 4'-phosphoryl)serine).

Belongs to the acyl carrier protein (ACP) family. In terms of processing, 4'-phosphopantetheine is transferred from CoA to a specific serine of apo-ACP by AcpS. This modification is essential for activity because fatty acids are bound in thioester linkage to the sulfhydryl of the prosthetic group.

It is found in the cytoplasm. Its pathway is lipid metabolism; fatty acid biosynthesis. Functionally, carrier of the growing fatty acid chain in fatty acid biosynthesis. The protein is Acyl carrier protein of Paramagnetospirillum magneticum (strain ATCC 700264 / AMB-1) (Magnetospirillum magneticum).